A 217-amino-acid polypeptide reads, in one-letter code: Ras-related protein Rab11B (217 aa).

21–28 (GDSGVGKS) provides a ligand contact to GTP. The Effector region motif lies at 43-51 (SKSTIGVEF). Residues 69–73 (DTAGQ) and 127–130 (NKAD) contribute to the GTP site. 2 S-geranylgeranyl cysteine lipidation sites follow: C214 and C215.

Belongs to the small GTPase superfamily. Rab family.

Its subcellular location is the cell membrane. In Nicotiana tabacum (Common tobacco), this protein is Ras-related protein Rab11B (RAB11B).